A 505-amino-acid chain; its full sequence is Glycerol kinase 2 (505 aa).

Thr-17 is an ADP binding site. 3 residues coordinate ATP: Thr-17, Thr-18, and Ser-19. Thr-17 lines the sn-glycerol 3-phosphate pocket. Position 21 (Arg-21) interacts with ADP. Sn-glycerol 3-phosphate contacts are provided by Arg-87, Glu-88, Tyr-139, and Asp-249. Glycerol-binding residues include Arg-87, Glu-88, Tyr-139, Asp-249, and Gln-250. The ADP site is built by Thr-271 and Gly-314. Thr-271, Gly-314, Gln-318, and Gly-415 together coordinate ATP. Gly-415 and Asn-419 together coordinate ADP.

Belongs to the FGGY kinase family.

It catalyses the reaction glycerol + ATP = sn-glycerol 3-phosphate + ADP + H(+). The protein operates within polyol metabolism; glycerol degradation via glycerol kinase pathway; sn-glycerol 3-phosphate from glycerol: step 1/1. With respect to regulation, inhibited by fructose 1,6-bisphosphate (FBP). Its function is as follows. Key enzyme in the regulation of glycerol uptake and metabolism. Catalyzes the phosphorylation of glycerol to yield sn-glycerol 3-phosphate. The polypeptide is Glycerol kinase 2 (Pseudomonas aeruginosa (strain ATCC 15692 / DSM 22644 / CIP 104116 / JCM 14847 / LMG 12228 / 1C / PRS 101 / PAO1)).